A 351-amino-acid chain; its full sequence is MKALAKLKKQPGIWIINDAPIPEYGYNDVLIKIKKTAICGTDLHIYNWDKWSQNTIPVPMITGHEFAGEVVAKGDGVTSVDIGDRVSGEGHLVCGQCRNCRAGKRHLCRKTIGIGVNVQGAFAEYLVMPAVNVFKIPDSISDDIASTFDPMGNAIHTALSFNLTGEDVLITGAGPIGLMVVKIARFCGARRIVITDINEYRLQMARDFGATVALNVAPFKNQDELVKQMRKVMSDIGMTEGFDVGLEMSGINSAISMMLDVMNHGGKLSLLGISAGDISVDWGAILFKGLTLKGIYGREMFETWYLMTSMLQAGMDMNPIITHRLHIDEFQKGFEIMKSGQCGKVILDWSS.

Cysteine 39 provides a ligand contact to Zn(2+). Active-site charge relay system residues include threonine 41 and histidine 44. Residues histidine 64, glutamate 65, cysteine 94, cysteine 97, cysteine 100, and cysteine 108 each contribute to the Zn(2+) site. NAD(+) contacts are provided by residues isoleucine 176, aspartate 196, arginine 201, 271–273 (LGI), and 295–296 (IY).

Belongs to the zinc-containing alcohol dehydrogenase family. Homotetramer. The cofactor is Zn(2+).

Its subcellular location is the cytoplasm. The enzyme catalyses L-threonine + NAD(+) = (2S)-2-amino-3-oxobutanoate + NADH + H(+). The protein operates within amino-acid degradation; L-threonine degradation via oxydo-reductase pathway; glycine from L-threonine: step 1/2. Catalyzes the NAD(+)-dependent oxidation of L-threonine to 2-amino-3-ketobutyrate. The sequence is that of L-threonine 3-dehydrogenase from Francisella tularensis subsp. mediasiatica (strain FSC147).